The chain runs to 895 residues: Plasma membrane ATPase 1 (895 aa).

The tract at residues M1–P53 is disordered. Over M1 to K92 the chain is Cytoplasmic. Basic and acidic residues predominate over residues T7–S16. A compositionally biased stretch (acidic residues) spans G37–D46. A helical membrane pass occupies residues F93 to A113. Topologically, residues G114–D117 are extracellular. Residues W118–I137 form a helical membrane-spanning segment. The Cytoplasmic portion of the chain corresponds to Q138–N268. The chain crosses the membrane as a helical span at residues G269–F290. At Y291–R301 the chain is on the extracellular side. The helical transmembrane segment at Y302–A324 threads the bilayer. Topologically, residues V325 to I696 are cytoplasmic. The active-site 4-aspartylphosphate intermediate is the D355. D611 and D615 together coordinate Mg(2+). Residues N697–Y715 traverse the membrane as a helical segment. Topologically, residues D716–R731 are extracellular. The chain crosses the membrane as a helical span at residues L732–L751. Residues T752–Q801 are Cytoplasmic-facing. Residues L802–W822 form a helical membrane-spanning segment. At S823–R834 the chain is on the extracellular side. The helical transmembrane segment at T835 to Y851 threads the bilayer. Residues L852–T895 are Cytoplasmic-facing.

The protein belongs to the cation transport ATPase (P-type) (TC 3.A.3) family. Type IIIA subfamily.

It is found in the cell membrane. The catalysed reaction is ATP + H2O + H(+)(in) = ADP + phosphate + 2 H(+)(out). The plasma membrane ATPase of plants and fungi is a hydrogen ion pump. The proton gradient it generates drives the active transport of nutrients by H(+)-symport. The resulting external acidification and/or internal alkinization may mediate growth responses. In Candida albicans (Yeast), this protein is Plasma membrane ATPase 1 (PMA1).